We begin with the raw amino-acid sequence, 310 residues long: Glutaminase (310 aa).

7 residues coordinate substrate: Ser-66, Asn-117, Glu-161, Asn-168, Tyr-192, Tyr-244, and Val-262. At Lys-294 the chain carries N6-acetyllysine.

Belongs to the glutaminase family. Homotetramer.

The catalysed reaction is L-glutamine + H2O = L-glutamate + NH4(+). The protein is Glutaminase of Escherichia coli O81 (strain ED1a).